The primary structure comprises 89 residues: Small ribosomal subunit protein bS20 (89 aa).

This sequence belongs to the bacterial ribosomal protein bS20 family.

In terms of biological role, binds directly to 16S ribosomal RNA. The protein is Small ribosomal subunit protein bS20 of Helicobacter pylori (strain P12).